The following is a 475-amino-acid chain: UDP-glucosyltransferase 102 (475 aa).

UDP-alpha-D-glucose contacts are provided by residues S278, 344–345 (WA), 362–370 (HCGWNSTLE), and 384–387 (YGEQ).

Belongs to the UDP-glycosyltransferase family.

Its pathway is secondary metabolite biosynthesis; terpenoid biosynthesis. In terms of biological role, probable component of the triterpene saponins (e.g. ginsenosides) biosynthetic pathway. No detectable activity toward protopanaxatriol (PPT). In Panax ginseng (Korean ginseng), this protein is UDP-glucosyltransferase 102 (UGT102).